The following is a 1771-amino-acid chain: Fatty acid synthase alpha subunit pkiB (1771 aa).

A compositionally biased stretch (polar residues) spans 108–130; that stretch reads SQPTQPQFEPTSPSHLTKRSPSP. The interval 108–133 is disordered; the sequence is SQPTQPQFEPTSPSHLTKRSPSPSKA. The 79-residue stretch at 143 to 221 folds into the Carrier domain; the sequence is ELTLQAGHVI…ESFQPEFSGI (79 aa). Ser181 carries the post-translational modification O-(pantetheine 4'-phosphoryl)serine. The segment at 575-771 is beta-ketoacyl reductase; it reads HKAVLVTGAG…CGAVIGWTRG (197 aa). A Ketosynthase family 3 (KS3) domain is found at 1011-1531; sequence KELLHEVAVE…QKGAINIMVS (521 aa). Residues Cys1197, His1416, and His1457 each act as for beta-ketoacyl synthase activity in the active site. Positions 1650, 1651, and 1652 each coordinate Mg(2+). Residues 1650–1652, Tyr1676, Ser1686, 1695–1705, 1719–1722, and 1753–1755 each bind acetyl-CoA; these read DVE, EAAFKSLQTTS, EVGG, and ISH. Residues Ser1754 and His1755 each contribute to the Mg(2+) site.

This sequence belongs to the thiolase-like superfamily. Fungal fatty acid synthetase subunit alpha family. In terms of assembly, [Alpha(6)beta(6)] hexamers of two multifunctional subunits (alpha and beta).

The catalysed reaction is acetyl-CoA + n malonyl-CoA + 2n NADPH + 4n H(+) = a long-chain-acyl-CoA + n CoA + n CO2 + 2n NADP(+).. It catalyses the reaction a fatty acyl-[ACP] + malonyl-[ACP] + H(+) = a 3-oxoacyl-[ACP] + holo-[ACP] + CO2. The enzyme catalyses a (3R)-hydroxyacyl-[ACP] + NADP(+) = a 3-oxoacyl-[ACP] + NADPH + H(+). Its pathway is secondary metabolite biosynthesis. In terms of biological role, fatty acid synthase alpha subunit; part of the pki gene cluster that mediates the biosynthesis of 2,4-dihydroxy-3-methyl-6-(2-oxoundecyl)benzaldehyde. The first step in the pathway is the generation of the decanoyl starter unit by the FAS composed of subunits pkiB and pkiC, which is then transferred directly from the FAS to the SAT domain of the non-reducing polyketide synthase pkiA. PkiA condenses the decanoyyl starter unit with 4 malonyl-CoA units and performs one methylation step to yield 2,4-dihydroxy-3-methyl-6-(2-oxoundecyl)benzaldehyde. The polypeptide is Fatty acid synthase alpha subunit pkiB (Emericella nidulans (strain FGSC A4 / ATCC 38163 / CBS 112.46 / NRRL 194 / M139) (Aspergillus nidulans)).